The sequence spans 590 residues: Probable indole-3-acetic acid-amido synthetase GH3.1 (590 aa).

It belongs to the IAA-amido conjugating enzyme family.

In terms of biological role, catalyzes the synthesis of indole-3-acetic acid (IAA)-amino acid conjugates, providing a mechanism for the plant to cope with the presence of excess auxin. This Arabidopsis thaliana (Mouse-ear cress) protein is Probable indole-3-acetic acid-amido synthetase GH3.1 (GH3.1).